A 393-amino-acid polypeptide reads, in one-letter code: Elongation factor Tu (393 aa).

A tr-type G domain is found at 10–203; it reads KPHVNIGTIG…AVDSYIPEPV (194 aa). Residues 19–26 form a G1 region; sequence GHVDHGKT. 19-26 provides a ligand contact to GTP; sequence GHVDHGKT. T26 lines the Mg(2+) pocket. Positions 60-64 are G2; the sequence is GITIS. Residues 81-84 form a G3 region; that stretch reads DCPG. Residues 81–85 and 136–139 contribute to the GTP site; these read DCPGH and NKVD. The interval 136 to 139 is G4; sequence NKVD. Positions 173-175 are G5; sequence SAL.

It belongs to the TRAFAC class translation factor GTPase superfamily. Classic translation factor GTPase family. EF-Tu/EF-1A subfamily. In terms of assembly, monomer.

It localises to the cytoplasm. It catalyses the reaction GTP + H2O = GDP + phosphate + H(+). GTP hydrolase that promotes the GTP-dependent binding of aminoacyl-tRNA to the A-site of ribosomes during protein biosynthesis. The polypeptide is Elongation factor Tu (Prosthecochloris aestuarii (strain DSM 271 / SK 413)).